Consider the following 514-residue polypeptide: Glycosyltransferase-like At3g57200 (514 aa).

The disordered stretch occupies residues 1–23 (MAGLYSSSSSSKPTLSSSPSSSS). A signal peptide spans 1-39 (MAGLYSSSSSSKPTLSSSPSSSSSSRLFLLVTLLPLSLA). Residues N156, N187, N251, and N460 are each glycosylated (N-linked (GlcNAc...) asparagine). The tract at residues 457–514 (PSKNSSTADSTSGITRESSQETGKRRVLEFHLDVDGESQASAVPPQSPPGLEATQMEL) is disordered. The segment covering 458 to 473 (SKNSSTADSTSGITRE) has biased composition (polar residues). The segment covering 474-490 (SSQETGKRRVLEFHLDV) has biased composition (basic and acidic residues).

This sequence belongs to the glycosyltransferase 25 family.

The protein resides in the secreted. Its subcellular location is the cell wall. It localises to the cytoplasm. The protein localises to the cell membrane. In terms of biological role, involved in the coordination between cell elongation and cellulose synthesis by promoting the expression of genes involved in cell elongation and cellulose synthesis. Acts as a regulator of plasmodesmatal permeability. Maybe a glycosyltransferase. The sequence is that of Glycosyltransferase-like At3g57200 from Arabidopsis thaliana (Mouse-ear cress).